Reading from the N-terminus, the 704-residue chain is Elongation factor G (704 aa).

In terms of domain architecture, tr-type G spans 8–291; it reads DKVRNIGIMA…AVIDYLASPV (284 aa). Residues 17-24, 90-94, and 144-147 each bind GTP; these read AHIDAGKT, DTPGH, and NKMD.

Belongs to the TRAFAC class translation factor GTPase superfamily. Classic translation factor GTPase family. EF-G/EF-2 subfamily.

It is found in the cytoplasm. Functionally, catalyzes the GTP-dependent ribosomal translocation step during translation elongation. During this step, the ribosome changes from the pre-translocational (PRE) to the post-translocational (POST) state as the newly formed A-site-bound peptidyl-tRNA and P-site-bound deacylated tRNA move to the P and E sites, respectively. Catalyzes the coordinated movement of the two tRNA molecules, the mRNA and conformational changes in the ribosome. The polypeptide is Elongation factor G (Chlorobaculum parvum (strain DSM 263 / NCIMB 8327) (Chlorobium vibrioforme subsp. thiosulfatophilum)).